The following is a 62-amino-acid chain: Conotoxin Im5.1 (62 aa).

Residues 1-19 (MYCLPVFIILLLLISSAPS) form the signal peptide. The propeptide occupies 20 to 48 (TPPQPRNKDRVHLISLLDNHKQILQRDWN). Tryptophan 60 is subject to Tryptophan amide.

Belongs to the conotoxin T superfamily. Post-translationally, contains 2 disulfide bonds that can be either 'C1-C3, C2-C4' or 'C1-C4, C2-C3', since these disulfide connectivities have been observed for conotoxins with cysteine framework V (for examples, see AC P0DQQ7 and AC P81755). As to expression, expressed by the venom duct.

It localises to the secreted. The sequence is that of Conotoxin Im5.1 from Conus imperialis (Imperial cone).